The sequence spans 407 residues: MKRAFIMVLDSFGIGATEDADRFGDVGSDTLGHIAEACAKGEADNGRKGPLNLPNLTRLGLVKAYEGSTGKIAAGMDGNADVIGAYAWAHELSSGKDTPSGHWEIAGVPVLFDWGYFSDHENSFPQELLDKLVKRANLPGYLGNCHSSGTVILDQFGEEHMKTGKPIFYTSADSVFQIACHEETFGLDKLYELCEIAREELTEGGYNIGRVIARPFIGDKAGNFQRTGNRHDLAVEPPAPTVLQKLVDEKQGHVVSVGKIADIYANCGITKKVKATGLDALFDATLKEMKEAGDKTIVFTNFVDFDSSWGHRRDIAGYAAGLELFDRRLPELMELVGEDDILILTADHGCDPSWTGTDHTREHIPVLIYGPKVKPGSLGHRETFADIGQTLATYFGTSPMDYGKNML.

Mn(2+) is bound by residues aspartate 10, aspartate 306, histidine 311, aspartate 347, histidine 348, and histidine 359.

Belongs to the phosphopentomutase family. Mn(2+) serves as cofactor.

The protein resides in the cytoplasm. It carries out the reaction 2-deoxy-alpha-D-ribose 1-phosphate = 2-deoxy-D-ribose 5-phosphate. It catalyses the reaction alpha-D-ribose 1-phosphate = D-ribose 5-phosphate. It participates in carbohydrate degradation; 2-deoxy-D-ribose 1-phosphate degradation; D-glyceraldehyde 3-phosphate and acetaldehyde from 2-deoxy-alpha-D-ribose 1-phosphate: step 1/2. Functionally, isomerase that catalyzes the conversion of deoxy-ribose 1-phosphate (dRib-1-P) and ribose 1-phosphate (Rib-1-P) to deoxy-ribose 5-phosphate (dRib-5-P) and ribose 5-phosphate (Rib-5-P), respectively. The chain is Phosphopentomutase from Salmonella paratyphi A (strain AKU_12601).